A 397-amino-acid polypeptide reads, in one-letter code: Acetate kinase (397 aa).

Asparagine 9 contacts Mg(2+). An ATP-binding site is contributed by lysine 16. Residue arginine 87 coordinates substrate. Aspartate 144 acts as the Proton donor/acceptor in catalysis. Residues 204–208 (HLGNG), 279–281 (DCR), and 327–331 (GIGEN) contribute to the ATP site. Glutamate 381 contacts Mg(2+).

The protein belongs to the acetokinase family. In terms of assembly, homodimer. Mg(2+) serves as cofactor. The cofactor is Mn(2+).

The protein localises to the cytoplasm. It carries out the reaction acetate + ATP = acetyl phosphate + ADP. It functions in the pathway metabolic intermediate biosynthesis; acetyl-CoA biosynthesis; acetyl-CoA from acetate: step 1/2. Catalyzes the formation of acetyl phosphate from acetate and ATP. Can also catalyze the reverse reaction. This is Acetate kinase from Chromobacterium violaceum (strain ATCC 12472 / DSM 30191 / JCM 1249 / CCUG 213 / NBRC 12614 / NCIMB 9131 / NCTC 9757 / MK).